A 570-amino-acid chain; its full sequence is Proline--tRNA ligase (570 aa).

This sequence belongs to the class-II aminoacyl-tRNA synthetase family. ProS type 1 subfamily. As to quaternary structure, homodimer.

It localises to the cytoplasm. It carries out the reaction tRNA(Pro) + L-proline + ATP = L-prolyl-tRNA(Pro) + AMP + diphosphate. In terms of biological role, catalyzes the attachment of proline to tRNA(Pro) in a two-step reaction: proline is first activated by ATP to form Pro-AMP and then transferred to the acceptor end of tRNA(Pro). As ProRS can inadvertently accommodate and process non-cognate amino acids such as alanine and cysteine, to avoid such errors it has two additional distinct editing activities against alanine. One activity is designated as 'pretransfer' editing and involves the tRNA(Pro)-independent hydrolysis of activated Ala-AMP. The other activity is designated 'posttransfer' editing and involves deacylation of mischarged Ala-tRNA(Pro). The misacylated Cys-tRNA(Pro) is not edited by ProRS. In Shewanella sp. (strain MR-7), this protein is Proline--tRNA ligase.